A 189-amino-acid polypeptide reads, in one-letter code: MLTKALILFGLLALAQGYSFTSREVKCHVCKAVVTELEEAIAKEDPHKMADVSGFRLDAQGNSISKKVRLVKSEMFLTELMEKICEKMDDYLKATYKSNGKFTLLKMIINGQMNPDSSLVDFVQDGDLNKSLGHFCNEVLEDNDEIFVKAFQAEELGNDLDIKICSEQASYCDESPVQEEYDFDGKEEL.

Residues 1–17 (MLTKALILFGLLALAQG) form the signal peptide. Residues 23–176 (REVKCHVCKA…EQASYCDESP (154 aa)) form the Saposin B-type domain. 3 disulfide bridges follow: Cys-27/Cys-172, Cys-30/Cys-165, and Cys-85/Cys-136. The Prevents secretion from ER motif lies at 186–189 (KEEL).

The protein belongs to the canopy family.

Its subcellular location is the endoplasmic reticulum. Functionally, involved in embryonic dorsal-ventral patterning which is generated by a series of serine protease processing events where gd processes snk which cleaves ea which then processes spz into the activating ligand for the Toll receptor. Required during this process for the secretion of ea from the developing embryo into the perivitelline space and for ea processing. This chain is Protein seele, found in Drosophila melanogaster (Fruit fly).